Reading from the N-terminus, the 203-residue chain is Cryptic neisserial protein 1 (203 aa).

The signal sequence occupies residues 1–18 (MRRAILLILTLTVGTSLA).

This sequence belongs to the Cnp family.

The protein localises to the periplasm. The protein resides in the cytoplasm. The sequence is that of Cryptic neisserial protein 1 from Neisseria gonorrhoeae (strain ATCC 700825 / FA 1090).